Consider the following 399-residue polypeptide: Forkhead box protein I3 (399 aa).

Disordered stretches follow at residues 87–109 (AGAQRGFAQPSASAPASPAGSAA), 221–287 (KRRR…ASTL), and 307–353 (SSSS…STVG). A compositionally biased stretch (low complexity) spans 96–109 (PSASAPASPAGSAA). A phosphoserine mark is found at Ser99 and Ser103. The segment at residues 129 to 223 (RPPYSYSALI…DNGNFRRKRR (95 aa)) is a DNA-binding region (fork-head). The short motif at 219 to 225 (RRKRRRR) is the Nuclear localization signal element. 2 stretches are compositionally biased toward polar residues: residues 228–248 (ASSNLTVPSGTSKSEGQSSRL) and 258–267 (SPSSILRPSQ). Phosphoserine is present on residues Ser258, Ser266, and Ser268. Polar residues-rich tracts occupy residues 275–287 (TKSTASSPGASTL), 307–317 (SSSSMGNQRTL), and 328–353 (QLPSSTFPNTSVPDSSPDSMQLSTVG). The 9aaTAD signature appears at 385–393 (SMVNSLIYP).

Phosphorylation promotes the transcription factor activity. Dephosphorylation by protein phosphatase 2A (PP2A) reduces its activity. As to expression, specifically expressed in the epithelium in developing ectodermal appendages. Expressed in pharyngeal endoderm and ectoderm. Expressed in pre-placodal ectoderm. Down-regulated as the otic placode is induced. Expressed in teeth and hair follicles throughout embryogenesis. Expressed in mammary glands only during the earliest stages of development.

It is found in the nucleus. Functionally, transcription factor required for pharyngeal arch development, which is involved in hair, ear, jaw and dental development. May act as a pioneer transcription factor during pharyngeal arch development. Required for epithelial cell differentiation within the epidermis. Acts at multiple stages of otic placode induction: necessary for preplacodal ectoderm to execute an inner ear program. Required for hair follicle stem cell specification. Acts downstream of TBX1 for the formation of the thymus and parathyroid glands from the third pharyngeal pouch. The sequence is that of Forkhead box protein I3 from Mus musculus (Mouse).